The chain runs to 238 residues: Purine nucleoside phosphorylase DeoD-type (238 aa).

Histidine 4 contacts a purine D-ribonucleoside. Phosphate is bound by residues glycine 20, arginine 24, arginine 43, and 87–90 (RVGS). A purine D-ribonucleoside contacts are provided by residues 179 to 181 (EME) and 203 to 204 (SD). Residue aspartate 204 is the Proton donor of the active site.

It belongs to the PNP/UDP phosphorylase family. Homohexamer; trimer of homodimers.

It carries out the reaction a purine D-ribonucleoside + phosphate = a purine nucleobase + alpha-D-ribose 1-phosphate. It catalyses the reaction a purine 2'-deoxy-D-ribonucleoside + phosphate = a purine nucleobase + 2-deoxy-alpha-D-ribose 1-phosphate. Its function is as follows. Catalyzes the reversible phosphorolytic breakdown of the N-glycosidic bond in the beta-(deoxy)ribonucleoside molecules, with the formation of the corresponding free purine bases and pentose-1-phosphate. The polypeptide is Purine nucleoside phosphorylase DeoD-type (Pasteurella multocida (strain Pm70)).